A 288-amino-acid polypeptide reads, in one-letter code: Acetyl-coenzyme A carboxylase carboxyl transferase subunit beta (288 aa).

Positions 34 to 288 constitute a CoA carboxyltransferase N-terminal domain; the sequence is LFSKCPACKV…RLLRMHGGVR (255 aa). Zn(2+)-binding residues include Cys38, Cys41, Cys56, and Cys59. Residues 38-59 form a C4-type zinc finger; sequence CPACKVILYKNDLGLEKTCQHC.

It belongs to the AccD/PCCB family. In terms of assembly, acetyl-CoA carboxylase is a heterohexamer composed of biotin carboxyl carrier protein (AccB), biotin carboxylase (AccC) and two subunits each of ACCase subunit alpha (AccA) and ACCase subunit beta (AccD). Zn(2+) is required as a cofactor.

The protein localises to the cytoplasm. The catalysed reaction is N(6)-carboxybiotinyl-L-lysyl-[protein] + acetyl-CoA = N(6)-biotinyl-L-lysyl-[protein] + malonyl-CoA. It participates in lipid metabolism; malonyl-CoA biosynthesis; malonyl-CoA from acetyl-CoA: step 1/1. Its function is as follows. Component of the acetyl coenzyme A carboxylase (ACC) complex. Biotin carboxylase (BC) catalyzes the carboxylation of biotin on its carrier protein (BCCP) and then the CO(2) group is transferred by the transcarboxylase to acetyl-CoA to form malonyl-CoA. The chain is Acetyl-coenzyme A carboxylase carboxyl transferase subunit beta from Streptococcus suis (strain 98HAH33).